A 179-amino-acid polypeptide reads, in one-letter code: uncharacterized protein (179 aa).

Over residues 1–15 (MQRQTGHMEDKKRTG) the composition is skewed to basic and acidic residues. Residues 1–32 (MQRQTGHMEDKKRTGLESQGTENAFSDGRDGK) are disordered.

This is an uncharacterized protein from Gallus gallus (Chicken).